The following is a 338-amino-acid chain: RNA 3'-terminal phosphate cyclase (338 aa).

Residues Q103 and 283–287 (YLADQ) each bind ATP. H308 (tele-AMP-histidine intermediate) is an active-site residue.

It belongs to the RNA 3'-terminal cyclase family. Type 1 subfamily.

It localises to the cytoplasm. The enzyme catalyses a 3'-end 3'-phospho-ribonucleotide-RNA + ATP = a 3'-end 2',3'-cyclophospho-ribonucleotide-RNA + AMP + diphosphate. In terms of biological role, catalyzes the conversion of 3'-phosphate to a 2',3'-cyclic phosphodiester at the end of RNA. The mechanism of action of the enzyme occurs in 3 steps: (A) adenylation of the enzyme by ATP; (B) transfer of adenylate to an RNA-N3'P to produce RNA-N3'PP5'A; (C) and attack of the adjacent 2'-hydroxyl on the 3'-phosphorus in the diester linkage to produce the cyclic end product. The biological role of this enzyme is unknown but it is likely to function in some aspects of cellular RNA processing. The polypeptide is RNA 3'-terminal phosphate cyclase (Escherichia coli O45:K1 (strain S88 / ExPEC)).